Here is a 55-residue protein sequence, read N- to C-terminus: Large ribosomal subunit protein bL33 (55 aa).

Belongs to the bacterial ribosomal protein bL33 family.

In Burkholderia ambifaria (strain MC40-6), this protein is Large ribosomal subunit protein bL33.